We begin with the raw amino-acid sequence, 483 residues long: MSFRLRYAPSPTGFLHIGNTRTALMNYLFAKHYNGSFIVRIEDTDLARNVEGAIESQFENLNWLGIYPDESIFNPNDQKYGKYMQSQKFDRYKQLAEQLVDQNKAYRCFCTSEELEKDYEDQTSKGIIATKYSQKCLFLTQDQIQKNLENKKEYSIRFKVPKNKTWTINDIVRGDVSFDSKDLGDFVILKSNGVATYNFAVVVDDYDMQITHVLRGEEHISNTPRQMMIYDAFNWNYPMFGHLTLIVDNTGKKLSKRSGNALFFIEQYKKQGYLSQAIFNYIALLGWSPPGEQEILSQNELIKIFDEKRFSKSPSTFDMVKMKWINSVYMKKLDDDKYLEFVKSFINTNKFDITSKSETWLNHLLLLYKKELEYAEQINDHLDLFFNKNTLDNNTIDVLNNLTNYKNVVEIFKNQINVLKDWTIENIKQIIKDTSTLANVKGKDLFMPIRIFATKSEHGPSLADVIYLLGKTTVLNNINSLER.

Residues 9-19 carry the 'HIGH' region motif; it reads PSPTGFLHIGN. The short motif at 253 to 257 is the 'KMSKS' region element; that stretch reads KLSKR. Lysine 256 lines the ATP pocket.

The protein belongs to the class-I aminoacyl-tRNA synthetase family. Glutamate--tRNA ligase type 1 subfamily. Monomer.

Its subcellular location is the cytoplasm. It carries out the reaction tRNA(Glu) + L-glutamate + ATP = L-glutamyl-tRNA(Glu) + AMP + diphosphate. In terms of biological role, catalyzes the attachment of glutamate to tRNA(Glu) in a two-step reaction: glutamate is first activated by ATP to form Glu-AMP and then transferred to the acceptor end of tRNA(Glu). The polypeptide is Glutamate--tRNA ligase (Mycoplasma capricolum subsp. capricolum (strain California kid / ATCC 27343 / NCTC 10154)).